An 825-amino-acid chain; its full sequence is Breast cancer anti-estrogen resistance protein 3 homolog (825 aa).

At alanine 2 the chain carries N-acetylalanine. 5 positions are modified to phosphoserine: serine 32, serine 78, serine 83, serine 182, and serine 290. The interval 40 to 84 (EAYPDVSIHGTLPRKKKGPPPIRSCDSASHMGTLPHSKSPRQSSP) is disordered. One can recognise an SH2 domain in the interval 154-253 (WYHGRIPRQV…QSGAIIFQPI (100 aa)). A disordered region spans residues 300-320 (DHSLPRGNLLRNKDKSGSQPA). An N6-methyllysine modification is found at lysine 334. A phosphoserine mark is found at serine 358, serine 363, and serine 375. The residue at position 442 (arginine 442) is an Omega-N-methylarginine. Residue serine 471 is modified to Phosphoserine. Residues 548–818 (DARVIAQHML…TALSRKLEPP (271 aa)) enclose the Ras-GEF domain. The segment at 744 to 748 (LATAR) is mediates the interaction with BCAR1/p130CAS.

As to quaternary structure, part of a complex comprised of PTPRA, BCAR1, BCAR3 and SRC; the formation of the complex is dependent on integrin mediated-tyrosine phosphorylation of PTPRA. Within the complex, interacts (via SH2 domain) with PTPRA (when phosphorylated on 'Tyr-792'). Interacts (via Ras-GEF domain) with BCAR1. Interacts (via Ras-GEF domain) with NEDD9. Interacts with PTK2/FAK1. Interacts with PTPN1. Interacts (via SH2 domain) with EGFR (when tyrosine-phosphorylated). Phosphorylated on tyrosine residues.

The protein localises to the cytoplasm. Its subcellular location is the cell junction. It localises to the focal adhesion. Its function is as follows. Acts as an adapter protein downstream of several growth factor receptors to promote cell proliferation, migration, and redistribution of actin fibers. Specifically involved in INS/insulin signaling pathway by mediating MAPK1/ERK2-MAPK3/ERK1 activation and DNA synthesis. Promotes insulin-mediated membrane ruffling. In response to vasoconstrictor peptide EDN1, involved in the activation of RAP1 downstream of PTK2B via interaction with phosphorylated BCAR1. Inhibits cell migration and invasion via regulation of TGFB-mediated matrix digestion, actin filament rearrangement, and inhibition of invadopodia activity. May inhibit TGFB/SMAD signaling, via facilitating BCAR1 and SMAD2 and/or SMAD3 interaction. Regulates EGF-induced DNA synthesis. Required for the maintenance of ocular lens morphology and structural integrity, potentially via regulation of focal adhesion complex signaling. Acts upstream of PTPRA to regulate the localization of BCAR1 and PTPRA to focal adhesions, via regulation of SRC-mediated phosphorylation of PTPRA. Positively regulates integrin-induced tyrosine phosphorylation of BCAR1. Acts as a guanine nucleotide exchange factor (GEF) for small GTPases RALA, RAP1A and RRAS. However, in a contrasting study, lacks GEF activity towards RAP1. The protein is Breast cancer anti-estrogen resistance protein 3 homolog of Rattus norvegicus (Rat).